Here is a 404-residue protein sequence, read N- to C-terminus: Pyrophosphate--fructose 6-phosphate 1-phosphotransferase (404 aa).

Residue glycine 12 participates in diphosphate binding. Aspartate 121 contributes to the Mg(2+) binding site. Substrate contacts are provided by residues 149 to 151, 194 to 196, glutamate 266, and 323 to 326; these read TID, MGR, and YFSR. The active-site Proton acceptor is the aspartate 151.

This sequence belongs to the phosphofructokinase type A (PFKA) family. PPi-dependent PFK group II subfamily. Clade 'P' sub-subfamily. As to quaternary structure, homodimer. Requires Mg(2+) as cofactor.

Its subcellular location is the cytoplasm. It carries out the reaction beta-D-fructose 6-phosphate + diphosphate = beta-D-fructose 1,6-bisphosphate + phosphate + H(+). Its pathway is carbohydrate degradation; glycolysis; D-glyceraldehyde 3-phosphate and glycerone phosphate from D-glucose: step 3/4. Its activity is regulated as follows. Non-allosteric. Its function is as follows. Catalyzes the phosphorylation of D-fructose 6-phosphate, the first committing step of glycolysis. Uses inorganic phosphate (PPi) as phosphoryl donor instead of ATP like common ATP-dependent phosphofructokinases (ATP-PFKs), which renders the reaction reversible, and can thus function both in glycolysis and gluconeogenesis. Consistently, PPi-PFK can replace the enzymes of both the forward (ATP-PFK) and reverse (fructose-bisphosphatase (FBPase)) reactions. The protein is Pyrophosphate--fructose 6-phosphate 1-phosphotransferase of Propionibacterium freudenreichii subsp. shermanii (strain ATCC 9614 / DSM 4902 / CIP 103027 / NCIMB 8099 / CIRM-BIA1).